The chain runs to 896 residues: Translation initiation factor IF-2 (896 aa).

Residues 32–306 form a disordered region; the sequence is LAQAGSSDTK…HKTKKQSEEH (275 aa). Polar residues-rich tracts occupy residues 35–48 and 114–126; these read AGSS…VSKA and ADST…SSQE. Residues 156 to 170 are compositionally biased toward basic and acidic residues; it reads ARNEETPIIRTRTEP. Residues 213–237 are compositionally biased toward polar residues; the sequence is QQTRPSVETASTKQQQPSGTNTRPA. Basic and acidic residues predominate over residues 256–280; the sequence is RGPDRDRTKRSDENVKAFTGRDRYG. Positions 401–570 constitute a tr-type G domain; that stretch reads IRSPIVAFMG…ALQAEVLELK (170 aa). Positions 410 to 417 are G1; sequence GHVDHGKT. Residue 410 to 417 coordinates GTP; it reads GHVDHGKT. The G2 stretch occupies residues 435–439; the sequence is AITQH. The G3 stretch occupies residues 456–459; that stretch reads DTPG. Residues 456–460 and 510–513 contribute to the GTP site; these read DTPGH and NKCD. Residues 510–513 are G4; the sequence is NKCD. Positions 546 to 548 are G5; that stretch reads SAK.

The protein belongs to the TRAFAC class translation factor GTPase superfamily. Classic translation factor GTPase family. IF-2 subfamily.

It localises to the cytoplasm. Its function is as follows. One of the essential components for the initiation of protein synthesis. Protects formylmethionyl-tRNA from spontaneous hydrolysis and promotes its binding to the 30S ribosomal subunits. Also involved in the hydrolysis of GTP during the formation of the 70S ribosomal complex. The chain is Translation initiation factor IF-2 (infB) from Chlamydia muridarum (strain MoPn / Nigg).